A 222-amino-acid chain; its full sequence is Elongation factor 1-beta' (222 aa).

The disordered stretch occupies residues 71–113 (SQGTSPLTAGAKPTAPAPAAKDDDDDDVDLFGSGDEEEDAEAE). The segment covering 78-89 (TAGAKPTAPAPA) has biased composition (low complexity). A compositionally biased stretch (acidic residues) spans 92 to 111 (DDDDDDVDLFGSGDEEEDAE).

It belongs to the EF-1-beta/EF-1-delta family. EF-1 is composed of 4 subunits: alpha, beta, beta' and gamma. In terms of processing, phosphorylated.

Functionally, EF-1-beta and EF-1-beta' stimulate the exchange of GDP bound to EF-1-alpha to GTP. The protein is Elongation factor 1-beta' of Bombyx mori (Silk moth).